The sequence spans 300 residues: MSVFINKDTRVIVQGITGSTALFHTKQMLEYGTNIVGGVTPGKGGTEAEGVPVFNTVAEAVQTTGANASVIYVPAPFAADAIMEAVDAELDLVICITEHIPVLDMVKVKRFMEGKKTRLIGPNCPGVITPEECKIGIMPGYIHKKGHVGVVSRSGTLTYEAVHQLSEAGVGQSTAVGIGGDPVNGTNFIDVLKAFNEDPDTHAVIMIGEIGGTAEEEAAEWVKANMTKPVVGFIGGKTAPPGKRMGHAGAIISGGKGTADEKIKTLNACGIEVAETPSVMGETLIKVLKEKNLFETCKTH.

CoA is bound by residues Thr17 to Thr20, Lys43, and Ile96 to Glu98. Tyr159 lines the substrate pocket. Residue His247 is the Tele-phosphohistidine intermediate of the active site.

The protein belongs to the succinate/malate CoA ligase alpha subunit family. As to quaternary structure, heterotetramer of two alpha and two beta subunits.

It catalyses the reaction succinate + ATP + CoA = succinyl-CoA + ADP + phosphate. It carries out the reaction GTP + succinate + CoA = succinyl-CoA + GDP + phosphate. It participates in carbohydrate metabolism; tricarboxylic acid cycle; succinate from succinyl-CoA (ligase route): step 1/1. Succinyl-CoA synthetase functions in the citric acid cycle (TCA), coupling the hydrolysis of succinyl-CoA to the synthesis of either ATP or GTP and thus represents the only step of substrate-level phosphorylation in the TCA. The alpha subunit of the enzyme binds the substrates coenzyme A and phosphate, while succinate binding and nucleotide specificity is provided by the beta subunit. This is Succinate--CoA ligase [ADP-forming] subunit alpha from Bacillus subtilis (strain 168).